A 263-amino-acid polypeptide reads, in one-letter code: Tryptophan synthase alpha chain (263 aa).

Residues E49 and D60 each act as proton acceptor in the active site.

The protein belongs to the TrpA family. In terms of assembly, tetramer of two alpha and two beta chains.

The catalysed reaction is (1S,2R)-1-C-(indol-3-yl)glycerol 3-phosphate + L-serine = D-glyceraldehyde 3-phosphate + L-tryptophan + H2O. The protein operates within amino-acid biosynthesis; L-tryptophan biosynthesis; L-tryptophan from chorismate: step 5/5. Its function is as follows. The alpha subunit is responsible for the aldol cleavage of indoleglycerol phosphate to indole and glyceraldehyde 3-phosphate. This Cereibacter sphaeroides (strain KD131 / KCTC 12085) (Rhodobacter sphaeroides) protein is Tryptophan synthase alpha chain.